The following is a 166-amino-acid chain: Monodehydroascorbate reductase, fruit isozyme (166 aa).

This sequence belongs to the FAD-dependent oxidoreductase family. FAD is required as a cofactor. In terms of processing, the N-terminus is blocked.

It carries out the reaction 2 monodehydro-L-ascorbate radical + NADH + H(+) = 2 L-ascorbate + NAD(+). Functionally, catalyzes the conversion of monodehydroascorbate to ascorbate, oxidizing NADH in the process. This chain is Monodehydroascorbate reductase, fruit isozyme, found in Cucumis sativus (Cucumber).